A 212-amino-acid chain; its full sequence is MGTNKPVVIGIAGGSGSGKTSVTKAIFDHFQGHSILILEQDYYYKDQSHLPMEERLKTNYDHPLAFDNDLLIEHLHQLLAYKMIEKPVYDYTLHTRSEEVIPVEPKDVIILEGILVLEDPRLCELMDIKLFVDTDADLRILRRMQRDIKERGRTMDSVIEQYVNVVRPMHNQFIEPSKKFADIIIPEGGQNHVAIDIMVTKIATILEEKVNL.

Residue 13 to 20 (GGSGSGKT) participates in ATP binding.

This sequence belongs to the uridine kinase family.

The protein localises to the cytoplasm. It catalyses the reaction uridine + ATP = UMP + ADP + H(+). The enzyme catalyses cytidine + ATP = CMP + ADP + H(+). It functions in the pathway pyrimidine metabolism; CTP biosynthesis via salvage pathway; CTP from cytidine: step 1/3. Its pathway is pyrimidine metabolism; UMP biosynthesis via salvage pathway; UMP from uridine: step 1/1. This Bacillus cytotoxicus (strain DSM 22905 / CIP 110041 / 391-98 / NVH 391-98) protein is Uridine kinase.